Here is a 579-residue protein sequence, read N- to C-terminus: Nuclear hormone receptor family member nhr-47 (579 aa).

The nuclear receptor DNA-binding region spans 8–83; that stretch reads GTLCAVCDDI…VGMDKNSIQN (76 aa). 2 consecutive NR C4-type zinc fingers follow at residues 11-31 and 47-71; these read CAVC…CNGC and CQGN…LQKC. The segment at 87–128 is disordered; sequence RIGYTKRKRRHDDNDMEGGVHHSEHIRDGSSGSPQMNDESPE. Residues 104–114 show a composition bias toward basic and acidic residues; sequence GGVHHSEHIRD. In terms of domain architecture, NR LBD spans 164–553; it reads ADLHSYATLE…SLVKETSLGP (390 aa).

The protein belongs to the nuclear hormone receptor family.

The protein resides in the nucleus. In terms of biological role, orphan nuclear receptor. The sequence is that of Nuclear hormone receptor family member nhr-47 (nhr-47) from Caenorhabditis elegans.